We begin with the raw amino-acid sequence, 374 residues long: tRNA 2-selenouridine synthase (374 aa).

One can recognise a Rhodanese domain in the interval 12–136; sequence FLRDVPMLDT…MRGFLLQTID (125 aa). Cys-95 (S-selanylcysteine intermediate) is an active-site residue.

This sequence belongs to the SelU family. Monomer.

The catalysed reaction is 5-methylaminomethyl-2-thiouridine(34) in tRNA + selenophosphate + (2E)-geranyl diphosphate + H2O + H(+) = 5-methylaminomethyl-2-selenouridine(34) in tRNA + (2E)-thiogeraniol + phosphate + diphosphate. The enzyme catalyses 5-methylaminomethyl-2-thiouridine(34) in tRNA + (2E)-geranyl diphosphate = 5-methylaminomethyl-S-(2E)-geranyl-thiouridine(34) in tRNA + diphosphate. It catalyses the reaction 5-methylaminomethyl-S-(2E)-geranyl-thiouridine(34) in tRNA + selenophosphate + H(+) = 5-methylaminomethyl-2-(Se-phospho)selenouridine(34) in tRNA + (2E)-thiogeraniol. It carries out the reaction 5-methylaminomethyl-2-(Se-phospho)selenouridine(34) in tRNA + H2O = 5-methylaminomethyl-2-selenouridine(34) in tRNA + phosphate. Its function is as follows. Involved in the post-transcriptional modification of the uridine at the wobble position (U34) of tRNA(Lys), tRNA(Glu) and tRNA(Gln). Catalyzes the conversion of 2-thiouridine (S2U-RNA) to 2-selenouridine (Se2U-RNA). Acts in a two-step process involving geranylation of 2-thiouridine (S2U) to S-geranyl-2-thiouridine (geS2U) and subsequent selenation of the latter derivative to 2-selenouridine (Se2U) in the tRNA chain. This Bordetella petrii (strain ATCC BAA-461 / DSM 12804 / CCUG 43448) protein is tRNA 2-selenouridine synthase.